We begin with the raw amino-acid sequence, 126 residues long: uncharacterized protein (126 aa).

This is an uncharacterized protein from Homo sapiens (Human).